We begin with the raw amino-acid sequence, 941 residues long: Replicative DNA helicase DnaB (941 aa).

The tract at residues 1–25 (MAEFEERPRLSIGEEEAPPYPLEKL) is disordered. The 271-residue stretch at 214 to 484 (RPGGITGVPS…PVYRLTTRLG (271 aa)) folds into the SF4 helicase; first part domain. 245-252 (ARPSMGKT) provides a ligand contact to ATP. Residues 534-683 (LLGHLIGDGC…VQSLLLRLGI (150 aa)) form the DOD-type homing endonuclease domain. Positions 646–915 (DGCIQMRRGK…ARFENLTMYQ (270 aa)) constitute an SF4 helicase; second part domain. The interval 914–941 (YQPEPGTPLPETPDETILPSGPPDEAPF) is disordered.

It belongs to the helicase family. DnaB subfamily. Homohexamer. Upon expression in E.coli this protein undergoes self splicing that involves a post-translational excision of the intervening region (intein) followed by peptide ligation.

It carries out the reaction Couples ATP hydrolysis with the unwinding of duplex DNA at the replication fork by translocating in the 5'-3' direction. This creates two antiparallel DNA single strands (ssDNA). The leading ssDNA polymer is the template for DNA polymerase III holoenzyme which synthesizes a continuous strand.. It catalyses the reaction ATP + H2O = ADP + phosphate + H(+). The main replicative DNA helicase, it participates in initiation and elongation during chromosome replication. Travels ahead of the DNA replisome, separating dsDNA into templates for DNA synthesis. A processive ATP-dependent 5'-3' DNA helicase it has DNA-dependent ATPase activity. Functionally, the intein is an endonuclease. The sequence is that of Replicative DNA helicase DnaB from Rhodothermus marinus (Rhodothermus obamensis).